The following is a 146-amino-acid chain: Hemoglobin subunit beta (146 aa).

At Val1 the chain carries N-acetylvaline. A Globin domain is found at 2 to 146; that stretch reads HLTAEEKSAV…VANALAHKYH (145 aa). A Phosphothreonine modification is found at Thr12. Ser44 bears the Phosphoserine mark. Lys59 is subject to N6-acetyllysine. His63 contributes to the heme b binding site. The residue at position 82 (Lys82) is an N6-acetyllysine. Residue His92 coordinates heme b. The residue at position 93 (Cys93) is an S-nitrosocysteine. An N6-acetyllysine modification is found at Lys144.

Belongs to the globin family. Heterotetramer of two alpha chains and two beta chains. Red blood cells.

Involved in oxygen transport from the lung to the various peripheral tissues. The sequence is that of Hemoglobin subunit beta (HBB) from Meles meles (Eurasian badger).